Consider the following 334-residue polypeptide: Phosphate acyltransferase (334 aa).

This sequence belongs to the PlsX family. In terms of assembly, homodimer. Probably interacts with PlsY.

The protein resides in the cytoplasm. It catalyses the reaction a fatty acyl-[ACP] + phosphate = an acyl phosphate + holo-[ACP]. The protein operates within lipid metabolism; phospholipid metabolism. In terms of biological role, catalyzes the reversible formation of acyl-phosphate (acyl-PO(4)) from acyl-[acyl-carrier-protein] (acyl-ACP). This enzyme utilizes acyl-ACP as fatty acyl donor, but not acyl-CoA. This Acholeplasma laidlawii (strain PG-8A) protein is Phosphate acyltransferase.